The primary structure comprises 142 residues: ATP synthase epsilon chain (142 aa).

The protein belongs to the ATPase epsilon chain family. As to quaternary structure, F-type ATPases have 2 components, CF(1) - the catalytic core - and CF(0) - the membrane proton channel. CF(1) has five subunits: alpha(3), beta(3), gamma(1), delta(1), epsilon(1). CF(0) has three main subunits: a, b and c.

Its subcellular location is the cell inner membrane. In terms of biological role, produces ATP from ADP in the presence of a proton gradient across the membrane. In Shewanella pealeana (strain ATCC 700345 / ANG-SQ1), this protein is ATP synthase epsilon chain.